Here is a 476-residue protein sequence, read N- to C-terminus: ATP synthase subunit beta (476 aa).

Position 153 to 160 (153 to 160 (GGAGVGKT)) interacts with ATP.

Belongs to the ATPase alpha/beta chains family. In terms of assembly, F-type ATPases have 2 components, CF(1) - the catalytic core - and CF(0) - the membrane proton channel. CF(1) has five subunits: alpha(3), beta(3), gamma(1), delta(1), epsilon(1). CF(0) has three main subunits: a(1), b(2) and c(9-12). The alpha and beta chains form an alternating ring which encloses part of the gamma chain. CF(1) is attached to CF(0) by a central stalk formed by the gamma and epsilon chains, while a peripheral stalk is formed by the delta and b chains.

The protein resides in the cell membrane. The catalysed reaction is ATP + H2O + 4 H(+)(in) = ADP + phosphate + 5 H(+)(out). Produces ATP from ADP in the presence of a proton gradient across the membrane. The catalytic sites are hosted primarily by the beta subunits. The polypeptide is ATP synthase subunit beta (Latilactobacillus sakei subsp. sakei (strain 23K) (Lactobacillus sakei subsp. sakei)).